A 476-amino-acid polypeptide reads, in one-letter code: Ribulose bisphosphate carboxylase large chain (476 aa).

Substrate-binding residues include N124 and T174. The active-site Proton acceptor is K176. K178 is a binding site for substrate. Residues K202, D204, and E205 each contribute to the Mg(2+) site. N6-carboxylysine is present on K202. H295 (proton acceptor) is an active-site residue. R296, H328, and S380 together coordinate substrate.

It belongs to the RuBisCO large chain family. Type I subfamily. In terms of assembly, heterohexadecamer of 8 large chains and 8 small chains; disulfide-linked. The disulfide link is formed within the large subunit homodimers. It depends on Mg(2+) as a cofactor. Post-translationally, the disulfide bond which can form in the large chain dimeric partners within the hexadecamer appears to be associated with oxidative stress and protein turnover.

It localises to the carboxysome. It carries out the reaction 2 (2R)-3-phosphoglycerate + 2 H(+) = D-ribulose 1,5-bisphosphate + CO2 + H2O. The catalysed reaction is D-ribulose 1,5-bisphosphate + O2 = 2-phosphoglycolate + (2R)-3-phosphoglycerate + 2 H(+). In terms of biological role, ruBisCO catalyzes two reactions: the carboxylation of D-ribulose 1,5-bisphosphate, the primary event in carbon dioxide fixation, as well as the oxidative fragmentation of the pentose substrate in the photorespiration process. Both reactions occur simultaneously and in competition at the same active site. In Cyanothece sp. (strain PCC 7425 / ATCC 29141), this protein is Ribulose bisphosphate carboxylase large chain.